A 268-amino-acid chain; its full sequence is 4-hydroxy-tetrahydrodipicolinate reductase (268 aa).

Residues 10–15 (GSTGRM), glutamate 36, 99–101 (GTT), and 123–126 (APNM) contribute to the NAD(+) site. The active-site Proton donor/acceptor is the histidine 156. Histidine 157 is a binding site for (S)-2,3,4,5-tetrahydrodipicolinate. Lysine 160 acts as the Proton donor in catalysis. 166–167 (GT) contacts (S)-2,3,4,5-tetrahydrodipicolinate.

The protein belongs to the DapB family.

It is found in the cytoplasm. It carries out the reaction (S)-2,3,4,5-tetrahydrodipicolinate + NAD(+) + H2O = (2S,4S)-4-hydroxy-2,3,4,5-tetrahydrodipicolinate + NADH + H(+). The enzyme catalyses (S)-2,3,4,5-tetrahydrodipicolinate + NADP(+) + H2O = (2S,4S)-4-hydroxy-2,3,4,5-tetrahydrodipicolinate + NADPH + H(+). The protein operates within amino-acid biosynthesis; L-lysine biosynthesis via DAP pathway; (S)-tetrahydrodipicolinate from L-aspartate: step 4/4. Functionally, catalyzes the conversion of 4-hydroxy-tetrahydrodipicolinate (HTPA) to tetrahydrodipicolinate. The chain is 4-hydroxy-tetrahydrodipicolinate reductase from Nitrosomonas eutropha (strain DSM 101675 / C91 / Nm57).